A 213-amino-acid polypeptide reads, in one-letter code: Thymidylate kinase (213 aa).

10 to 17 serves as a coordination point for ATP; the sequence is GLEGAGKT.

The protein belongs to the thymidylate kinase family.

It carries out the reaction dTMP + ATP = dTDP + ADP. Phosphorylation of dTMP to form dTDP in both de novo and salvage pathways of dTTP synthesis. The polypeptide is Thymidylate kinase (Escherichia coli O157:H7 (strain EC4115 / EHEC)).